A 796-amino-acid chain; its full sequence is Probable phosphoketolase (796 aa).

The protein belongs to the XFP family. Thiamine diphosphate is required as a cofactor.

The sequence is that of Probable phosphoketolase from Streptomyces coelicolor (strain ATCC BAA-471 / A3(2) / M145).